Consider the following 419-residue polypeptide: MAKDKIVLAYSGGLDTSVAIKWLQDTYNYDVIAVALDVGEGKDLDFVQKKALQVGALKSIVVDAKDAFAEEFVLPALKANAMYEGKYPLVSALSRYLISRVLVEIAEKEGAVAVAHGCTGKGNDQVRFDVSFTALNPDIKIVAPVREWGWTRDEEIEYAKKNNIPIPIDLDNPYSIDQNLWGRSCECGVLEDPWAAPPEGAYDLTKSIMDAPDEAEEIEITFVQGKPTALNGEELPLAELILKLNKIAGNHGVGRIDHVENRLVGIKSREVYETPAATTLILAHRELEFLTQPREVAQFKPIVEQKLAQVIYEGLWFSPIRNAVQAFIEETQKHVTGVVRVKLHKGHAIVVGRTSASSLYSHELATYNAGDQFDHKAALGFIKLWGLPTKVYAQVNEGVLHENKNTAIKILDEKDAIKQ.

Residue 9–17 (AYSGGLDTS) participates in ATP binding. Tyrosine 87 provides a ligand contact to L-citrulline. Glycine 117 contacts ATP. L-aspartate contacts are provided by threonine 119, asparagine 123, and aspartate 124. Asparagine 123 is a binding site for L-citrulline. Arginine 127, serine 175, serine 184, glutamate 260, and tyrosine 272 together coordinate L-citrulline.

The protein belongs to the argininosuccinate synthase family. Type 1 subfamily. Homotetramer.

It localises to the cytoplasm. It catalyses the reaction L-citrulline + L-aspartate + ATP = 2-(N(omega)-L-arginino)succinate + AMP + diphosphate + H(+). The protein operates within amino-acid biosynthesis; L-arginine biosynthesis; L-arginine from L-ornithine and carbamoyl phosphate: step 2/3. The polypeptide is Argininosuccinate synthase (Brevibacillus brevis (strain 47 / JCM 6285 / NBRC 100599)).